Reading from the N-terminus, the 150-residue chain is Actin-depolymerizing factor 3 (150 aa).

The ADF-H domain occupies 7–150 (GVAVSEECKA…TLDVLKDHTS (144 aa)).

It belongs to the actin-binding proteins ADF family.

In terms of biological role, actin-depolymerizing protein. Severs actin filaments (F-actin) and binds to actin monomers. The sequence is that of Actin-depolymerizing factor 3 (ADF3) from Oryza sativa subsp. japonica (Rice).